Here is a 361-residue protein sequence, read N- to C-terminus: Deoxyribonuclease (361 aa).

Residues 1 to 24 (MMHLLRRGAFAILLIVLLPSAALA) form the signal peptide. H149 is a catalytic residue.

The protein belongs to the DNase I family. Requires Mg(2+) as cofactor. It depends on Ca(2+) as a cofactor.

It localises to the secreted. Functionally, DNA nuclease able to digest short and long DNA substrate. Is resistant to ionic strength and thus active at high salt concentration. The polypeptide is Deoxyribonuclease (Thioalkalivibrio sp. (strain K90mix)).